Reading from the N-terminus, the 223-residue chain is uncharacterized protein (223 aa).

The C4-type zinc-finger motif lies at 33–67 (CPICGGKGTLKAIQFIHRIPYFGEVMESTVVCERC).

Belongs to the ZPR1 family.

This is an uncharacterized protein from Pyrococcus horikoshii (strain ATCC 700860 / DSM 12428 / JCM 9974 / NBRC 100139 / OT-3).